We begin with the raw amino-acid sequence, 143 residues long: Antitumor antibiotic C-1027 apoprotein (143 aa).

An N-terminal signal peptide occupies residues Met-1–Ala-33. Cystine bridges form between Cys-69–Cys-78 and Cys-119–Cys-124.

It belongs to the neocarzinostatin family.

Its function is as follows. Binds non-covalently to a chromophore which is the cytotoxic and mutagenic component of the antibiotic. The chromophore binds to DNA as a weak intercalator and causes single- and double-strand breaks. This chain is Antitumor antibiotic C-1027 apoprotein (cagA), found in Streptomyces globisporus.